Reading from the N-terminus, the 132-residue chain is L-ectoine synthase (132 aa).

Belongs to the ectoine synthase family.

It catalyses the reaction (2S)-4-acetamido-2-aminobutanoate = L-ectoine + H2O. It functions in the pathway amine and polyamine biosynthesis; ectoine biosynthesis; L-ectoine from L-aspartate 4-semialdehyde: step 3/3. Its function is as follows. Catalyzes the circularization of gamma-N-acetyl-alpha,gamma-diaminobutyric acid (ADABA) to ectoine (1,4,5,6-tetrahydro-2-methyl-4-pyrimidine carboxylic acid), which is an excellent osmoprotectant. The protein is L-ectoine synthase of Hahella chejuensis (strain KCTC 2396).